We begin with the raw amino-acid sequence, 456 residues long: Putative F-box/LRR-repeat protein At5g02700 (456 aa).

In terms of domain architecture, F-box spans 26 to 72 (ADFINYMPDDILHHILSFIPTDLAMRTSVLSRRWRHVWCETPCLDIT). 5 LRR repeats span residues 126–154 (VRDFTYSKTYRFPDIFYLSSSLKLLDVTL), 177–202 (FCQIPDESIHNILSGCPILESLTLDT), 206–224 (LERLDLSKSPNLRRLDINQ), 271–300 (LSPLTADGYQTMALEMLSKFHNVKRLTVGE), and 330–355 (FVRSVIPGISRLLQNSPGLKKLRPST).

The polypeptide is Putative F-box/LRR-repeat protein At5g02700 (Arabidopsis thaliana (Mouse-ear cress)).